A 227-amino-acid polypeptide reads, in one-letter code: Probable methylthioribulose-1-phosphate dehydratase (227 aa).

Substrate is bound at residue Cys-87. His-105 and His-107 together coordinate Zn(2+). Residue Glu-129 is the Proton donor/acceptor of the active site. His-185 contacts Zn(2+).

Belongs to the aldolase class II family. MtnB subfamily. Requires Zn(2+) as cofactor.

The protein localises to the cytoplasm. It carries out the reaction 5-(methylsulfanyl)-D-ribulose 1-phosphate = 5-methylsulfanyl-2,3-dioxopentyl phosphate + H2O. The protein operates within amino-acid biosynthesis; L-methionine biosynthesis via salvage pathway; L-methionine from S-methyl-5-thio-alpha-D-ribose 1-phosphate: step 2/6. Catalyzes the dehydration of methylthioribulose-1-phosphate (MTRu-1-P) into 2,3-diketo-5-methylthiopentyl-1-phosphate (DK-MTP-1-P). The sequence is that of Probable methylthioribulose-1-phosphate dehydratase from Drosophila ananassae (Fruit fly).